We begin with the raw amino-acid sequence, 272 residues long: MKIAFVIRKDCSRCARIAESIIDLLPKDWEIIYDHEAAKFLNSKGLDISQISADVIITIGGDGTVLRTLQMAKGPVLGINMGGLGFLTELEVDEVGSAIFKLIKGQYRITESMKLKVEINGDRVEDCTNEAVVHTERIARIRQFKIYIDGHFLSTMKSDGIIVATPIGSSSYSSSAGGPLLLPTLKGMVISYLAPYSSRLKPVVVTSDSTVEIKIAGRDQECILILDGQREYTVRSGDTVRISRSENSARFLSFRESVYDRIRDKVIKHVVN.

The Proton acceptor role is filled by D62. Residues 62-63 (DG), R67, 129-130 (NE), R140, K157, D159, I167, 170-175 (SSYSSS), A194, and Q229 each bind NAD(+).

Belongs to the NAD kinase family. Requires a divalent metal cation as cofactor.

It localises to the cytoplasm. It catalyses the reaction NAD(+) + ATP = ADP + NADP(+) + H(+). Functionally, involved in the regulation of the intracellular balance of NAD and NADP, and is a key enzyme in the biosynthesis of NADP. Catalyzes specifically the phosphorylation on 2'-hydroxyl of the adenosine moiety of NAD to yield NADP. This is NAD kinase from Thermoplasma acidophilum (strain ATCC 25905 / DSM 1728 / JCM 9062 / NBRC 15155 / AMRC-C165).